A 259-amino-acid chain; its full sequence is Carbonic anhydrase 1 (259 aa).

An N-acetylalanine modification is found at Ala1. One can recognise an Alpha-carbonic anhydrase domain in the interval 2 to 258 (HAWGYGPTDG…LKGRHVRASF (257 aa)). The active-site Proton donor/acceptor is the His63. The Zn(2+) site is built by His93, His95, and His118. Substrate-binding positions include Thr197 and 197-198 (TT).

The protein belongs to the alpha-carbonic anhydrase family. It depends on Zn(2+) as a cofactor.

The protein localises to the cytoplasm. The catalysed reaction is hydrogencarbonate + H(+) = CO2 + H2O. Catalyzes the reversible hydration of carbon dioxide. This Chionodraco hamatus (Antarctic teleost icefish) protein is Carbonic anhydrase 1 (ca1).